The following is a 611-amino-acid chain: Putative type II restriction enzyme HgiDII (611 aa).

Residues 355–364 (YPSNPKKEEV) show a composition bias toward basic and acidic residues. The interval 355 to 434 (YPSNPKKEEV…PEPSPPPKQE (80 aa)) is disordered. Positions 381 to 409 (TNASSDSSTATENASSDSSTATENASSET) are enriched in low complexity. 2 tandem repeats follow at residues 382–392 (NASSDSSTATE) and 393–403 (NASSDSSTATE). The tract at residues 382–403 (NASSDSSTATENASSDSSTATE) is 2.5 X 11 AA tandem repeats. Residues 404 to 409 (NASSET) form a 3; truncated repeat. Residues 410–425 (NDGEVEDNSFFDDDIP) are compositionally biased toward acidic residues.

The catalysed reaction is Endonucleolytic cleavage of DNA to give specific double-stranded fragments with terminal 5'-phosphates.. Its function is as follows. According to REBASE this is a P subtype restriction enzyme that recognizes the double-stranded sequence 5'-GTCGAC-3' and cleaves after G-1. No restriction activity was detected upon overexpressing this protein in E.coli. The sequence is that of Putative type II restriction enzyme HgiDII from Herpetosiphon aurantiacus (Herpetosiphon giganteus).